The primary structure comprises 189 residues: Stathmin-4 (189 aa).

S-palmitoyl cysteine attachment occurs at residues Cys-20 and Cys-22. One can recognise an SLD domain in the interval 48 to 189 (SDMEVIELNK…NKELKEEASR (142 aa)). Ser-90 is modified (phosphoserine). A coiled-coil region spans residues 90–188 (SLEEIQKKLE…KNKELKEEAS (99 aa)). Positions 168-189 (QEKDKHAEEVRKNKELKEEASR) are disordered.

Belongs to the stathmin family.

It localises to the golgi apparatus. The protein resides in the cell projection. It is found in the growth cone. Its subcellular location is the axon. Exhibits microtubule-destabilizing activity. This Homo sapiens (Human) protein is Stathmin-4 (STMN4).